A 184-amino-acid polypeptide reads, in one-letter code: Large ribosomal subunit protein uL5 (184 aa).

The protein belongs to the universal ribosomal protein uL5 family. As to quaternary structure, part of the 50S ribosomal subunit; part of the 5S rRNA/L5/L18/L25 subcomplex. Contacts the 5S rRNA and the P site tRNA. Forms a bridge to the 30S subunit in the 70S ribosome.

Its function is as follows. This is one of the proteins that bind and probably mediate the attachment of the 5S RNA into the large ribosomal subunit, where it forms part of the central protuberance. In the 70S ribosome it contacts protein S13 of the 30S subunit (bridge B1b), connecting the 2 subunits; this bridge is implicated in subunit movement. Contacts the P site tRNA; the 5S rRNA and some of its associated proteins might help stabilize positioning of ribosome-bound tRNAs. The polypeptide is Large ribosomal subunit protein uL5 (Ureaplasma parvum serovar 3 (strain ATCC 27815 / 27 / NCTC 11736)).